The following is a 122-amino-acid chain: Small ribosomal subunit protein uS13 (122 aa).

A disordered region spans residues 97 to 122 (PCRGQRTKTNARTRKGPARTVAGKKK).

This sequence belongs to the universal ribosomal protein uS13 family. Part of the 30S ribosomal subunit. Forms a loose heterodimer with protein S19. Forms two bridges to the 50S subunit in the 70S ribosome.

In terms of biological role, located at the top of the head of the 30S subunit, it contacts several helices of the 16S rRNA. In the 70S ribosome it contacts the 23S rRNA (bridge B1a) and protein L5 of the 50S subunit (bridge B1b), connecting the 2 subunits; these bridges are implicated in subunit movement. Contacts the tRNAs in the A and P-sites. The chain is Small ribosomal subunit protein uS13 from Geobacter sp. (strain M21).